Consider the following 154-residue polypeptide: Large ribosomal subunit protein uL13 (154 aa).

It belongs to the universal ribosomal protein uL13 family. In terms of assembly, part of the 50S ribosomal subunit.

In terms of biological role, this protein is one of the early assembly proteins of the 50S ribosomal subunit, although it is not seen to bind rRNA by itself. It is important during the early stages of 50S assembly. This is Large ribosomal subunit protein uL13 from Brucella anthropi (strain ATCC 49188 / DSM 6882 / CCUG 24695 / JCM 21032 / LMG 3331 / NBRC 15819 / NCTC 12168 / Alc 37) (Ochrobactrum anthropi).